A 61-amino-acid chain; its full sequence is Large ribosomal subunit protein uL30 (61 aa).

This sequence belongs to the universal ribosomal protein uL30 family. As to quaternary structure, part of the 50S ribosomal subunit.

The chain is Large ribosomal subunit protein uL30 from Lactobacillus delbrueckii subsp. bulgaricus (strain ATCC 11842 / DSM 20081 / BCRC 10696 / JCM 1002 / NBRC 13953 / NCIMB 11778 / NCTC 12712 / WDCM 00102 / Lb 14).